Here is a 534-residue protein sequence, read N- to C-terminus: Steroid hormone receptor family member cnr14 (534 aa).

2 disordered regions span residues 30-53 (SGKT…QWSH) and 119-139 (PATS…GHTT). The span at 119–130 (PATSVTSSLSPP) shows a compositional bias: low complexity. Residues 148-223 (ISFCKVCGDK…SGMSKDSVRQ (76 aa)) constitute a DNA-binding region (nuclear receptor). NR C4-type zinc fingers lie at residues 151-171 (CKVC…CEGC) and 187-211 (CLKQ…FKKC). The 242-residue stretch at 252 to 493 (EVDAVYEAVL…PPLVVEMFQL (242 aa)) folds into the NR LBD domain. Positions 502-534 (HNNQENQYTPAPEHQSPQPQQPTPNQQQTPVHC) are disordered. The segment covering 511–534 (PAPEHQSPQPQQPTPNQQQTPVHC) has biased composition (low complexity).

Belongs to the nuclear hormone receptor family. NR1 subfamily. In terms of tissue distribution, most abundant in embryos.

The protein localises to the nucleus. Its function is as follows. Transcriptional regulator which is involved in the sex determination and X chromosome dosage compensation pathways. Directly binds to five 5'-A(G/C)(G/T)(T/G)C(A/G)-3' sites in the promoter of sex-determining factor xol-1 to negatively regulate its expression and promote hermaphrodite development. Together with fox-1 is involved in making the distinction between one and two X-chromosomes. Plays a role in the fox-1-mediated repression of the functionally active isoform (isoform b) of the sex-determining factor xol-1 gene to promote hermaphrodite development. Plays a role in the association of the dosage compensation complex proteins dpy-27 and sdc-3 with the hermaphrodite X chromosomes. This chain is Steroid hormone receptor family member cnr14, found in Caenorhabditis elegans.